The primary structure comprises 83 residues: Protein L83L (83 aa).

The span at 1–10 (MDTSLKNNDG) shows a compositional bias: polar residues. Positions 1-25 (MDTSLKNNDGASEADNKNYQDYKDE) are disordered. Over residues 14 to 25 (ADNKNYQDYKDE) the composition is skewed to basic and acidic residues.

The protein belongs to the asfivirus L83L family. In terms of assembly, interacts with host IL1B.

Its subcellular location is the host cytoplasm. Its function is as follows. May subvert the host innate immune response by interacting with host IL1B and interfering with its function. This Ornithodoros (relapsing fever ticks) protein is Protein L83L.